Reading from the N-terminus, the 797-residue chain is Plakophilin-3 (797 aa).

The tract at residues 58 to 81 (GQQSRHNGSAELDGSAESARGMPR) is disordered. Arg-81 carries the post-translational modification Omega-N-methylarginine. 3 positions are modified to phosphoserine: Ser-123, Ser-180, and Ser-183. The residue at position 195 (Tyr-195) is a Phosphotyrosine. Over residues 219–228 (ASSGSSRAGG) the composition is skewed to low complexity. The disordered stretch occupies residues 219–241 (ASSGSSRAGGLDWPEATEGPPSR). Phosphoserine is present on Ser-240. Thr-250 carries the phosphothreonine modification. The disordered stretch occupies residues 253-274 (RFQSSHRSRGGTGSVSGAGLEP). Residue Arg-261 is modified to Omega-N-methylarginine. The segment at 283–288 (SLSLSL) is required for interaction with SFN. Phosphoserine is present on residues Ser-285, Ser-313, Ser-314, and Ser-331. The segment at 294 to 724 (LPDVRGLDSY…AEVLVNIIAV (431 aa)) is required for interaction with GSK3B. 8 ARM repeats span residues 305–348 (GHRT…HRCY), 351–390 (AAAKKQARSLQAVPRLVKLFNHANQEVQRHATGAMRNLIY), 393–432 (VDNKLALVEENGIFELLRTLREQDDELRKNVTGILWNLSS), 449–487 (TDLVLSPLSGAGGPPLIQQNASEAEIFYNATGFLRNLSS), 491–536 (ATRQ…NLSY), 596–637 (PKGL…NITA), 645–684 (VLSRLALEQERILNPLLDRVRTADHNQLRSLTGLIRNLSR), and 689–730 (KDEM…NLVV). The interval 516 to 797 (VGKCEDKSVE…GYRKEDFLGP (282 aa)) is required for binding to PKP2 mRNA.

It belongs to the beta-catenin family. As to quaternary structure, found in a complex composed of CDH1, RAP1A and PKP3; PKP3 acts as a scaffold protein within the complex, the complex is required for CDH1 localization to mature desmosome cell junctions. Interacts with FXR1; the interaction facilitates the binding of PKP3 to PKP2 mRNA. Interacts (via ARM repeats) with GSK3B; the interaction may be involved in PKP3 protein degradation. Interacts with hyperphosphorylated and hypophosphorylated RB1; the interaction inhibits RB1 interaction with and repression of the transcription factor E2F1, potentially via sequestering RB1 to the cytoplasm. Interacts with CDKN1A; the interaction sequesters CDKN1A to the cytoplasm thereby repressing its role as an inhibitor of CDK4- and CDK6-driven RB1 phosphorylation. Interacts (via N-terminus) with SFN; the interaction maintains the cytoplasmic pool of PKP3, facilitates PKP3 exchange at desmosomes and restricts PKP3 localization to existing desmosome cell junctions. Interacts (via N-terminus) with JUP; the interaction is required for PKP3 localization to desmosome cell-cell junctions. Phosphorylated at Ser-285 when localized to the cytoplasm, PKP3 at desmosome cell junctions is not phosphorylated. Phosphorylation at Try-195 by SRC is induced by reactive oxygen species and potentially acts as a release mechanism from desmosome cell-cell junctions. As to expression, expressed in all layers of the epidermis, but is most abundant in the basal layer (at protein level). Expressed in keratinocytes of the epidermis at birth (at protein level). Expressed in the anagen non-keratinized inner root sheath cuticle and hair cuticle (at protein level). Also expressed in the matrix, precursors of the inner root sheath and hair shaft lineages (at protein level). Expressed at apical membranes in the outer hair root sheath and basal layer keratinocytes (at protein level). Expressed in intestinal epithelial cells and lamina propria of the ileum (at protein level). Expressed in keratinocytes (at protein level).

The protein localises to the nucleus. Its subcellular location is the cell junction. It localises to the desmosome. The protein resides in the cytoplasm. It is found in the cell membrane. The protein localises to the adherens junction. Its function is as follows. A component of desmosome cell-cell junctions which are required for positive regulation of cellular adhesion. Required for the localization of DSG2, DSP and PKP2 to mature desmosome junctions. May also play a role in the maintenance of DSG3 protein abundance in keratinocytes. Required for the formation of DSP-containing desmosome precursors in the cytoplasm during desmosome assembly. Also regulates the accumulation of CDH1 to mature desmosome junctions, via cAMP-dependent signaling and its interaction with activated RAP1A. Positively regulates the stabilization of PKP2 mRNA and therefore protein abundance, via its interaction with FXR1, may also regulate the protein abundance of DSP via the same mechanism. May also regulate the protein abundance of the desmosome component PKP1. Required for the organization of desmosome junctions at intercellular borders between basal keratinocytes of the epidermis, as a result plays a role in maintenance of the dermal barrier and regulation of the dermal inflammatory response. Required during epidermal keratinocyte differentiation for cell adherence at tricellular cell-cell contacts, via regulation of the timely formation of adherens junctions and desmosomes in a calcium-dependent manner, and may also play a role in the organization of the intracellular actin fiber belt. Acts as a negative regulator of the inflammatory response in hematopoietic cells of the skin and intestine, via modulation of proinflammatory cytokine production. Important for epithelial barrier maintenance in the intestine to reduce intestinal permeability, thereby plays a role in protection from intestinal-derived endotoxemia. Required for the development of hair follicles, via a role in the regulation of inner root sheaf length, correct alignment and anterior-posterior polarity of hair follicles. Promotes proliferation and cell-cycle G1/S phase transition of keratinocytes. Promotes E2F1-driven transcription of G1/S phase promoting genes by acting to release E2F1 from its inhibitory interaction with RB1, via sequestering RB1 and CDKN1A to the cytoplasm and thereby increasing CDK4- and CDK6-driven phosphorylation of RB1. May act as a scaffold protein to facilitate MAPK phosphorylation of RPS6KA protein family members and subsequently promote downstream EGFR signaling. May play a role in the positive regulation of transcription of Wnt-mediated TCF-responsive target genes. The protein is Plakophilin-3 (Pkp3) of Mus musculus (Mouse).